The primary structure comprises 110 residues: MSMTDLLSAEDIKKAIGAFTAADSFDHKKFFQMVGLKKKSADDVKKVFHILDKDKSGFIEEDELGSILKGFSSDARDLSAKETKTLMAAGDKDGDGKIGVEEFSTLVAES.

Residue serine 2 is modified to N-acetylserine. Phosphoserine is present on residues serine 2, serine 8, and serine 24. EF-hand domains follow at residues 39 to 74 (KSAD…FSSD) and 78 to 110 (LSAK…VAES). 6 residues coordinate Ca(2+): aspartate 52, aspartate 54, serine 56, phenylalanine 58, glutamate 60, and glutamate 63. At serine 66 the chain carries Phosphoserine. Aspartate 91, aspartate 93, aspartate 95, lysine 97, and glutamate 102 together coordinate Ca(2+).

In terms of biological role, in muscle, parvalbumin is thought to be involved in relaxation after contraction. It binds two calcium ions. The sequence is that of Parvalbumin alpha (Pvalb) from Rattus norvegicus (Rat).